Consider the following 522-residue polypeptide: Lysine--tRNA ligase (522 aa).

The short motif at 44 to 52 is the 'HIGH' region element; it reads PSGLPHIGT. A 'KMSKS' region motif is present at residues 290–294; it reads KISKS. Lys293 provides a ligand contact to ATP.

Belongs to the class-I aminoacyl-tRNA synthetase family.

Its subcellular location is the cytoplasm. The catalysed reaction is tRNA(Lys) + L-lysine + ATP = L-lysyl-tRNA(Lys) + AMP + diphosphate. This Rickettsia bellii (strain RML369-C) protein is Lysine--tRNA ligase.